A 610-amino-acid polypeptide reads, in one-letter code: UvrABC system protein C (610 aa).

Residues 16 to 94 (SQPGVYRMYD…IKLYQPRYNV (79 aa)) enclose the GIY-YIG domain. The 36-residue stretch at 204–239 (DQVLTQLIARMEKASQDLAFEEAARIRDQIQAVRRV) folds into the UVR domain.

It belongs to the UvrC family. Interacts with UvrB in an incision complex.

It is found in the cytoplasm. Functionally, the UvrABC repair system catalyzes the recognition and processing of DNA lesions. UvrC both incises the 5' and 3' sides of the lesion. The N-terminal half is responsible for the 3' incision and the C-terminal half is responsible for the 5' incision. This is UvrABC system protein C from Salmonella paratyphi B (strain ATCC BAA-1250 / SPB7).